Here is a 335-residue protein sequence, read N- to C-terminus: MSELCVGINGFGRIGRLVLRACLQKGIKVTAINDPFIDLQYMVYMFKYDSTHGRYKGEVHMEDGKLIVDGQAISVFQCMKPAEIPWGDAGALYVVESTGVFLSIEKASAHIQGGAKRVVVSAPSPDAPMFVMGVNQDKYDPSSMTIVSNASCTTNCLAPLAKVIHDNFGIEEALMTTVHAYTATQKTVDGPSAKAWRDGRGAHQNIIPASTGAAKAVGKVIPELNGKLTGMAFRVPVADVSVVDLTCRLTRPASYANIKESVKKAAHGPMKGILGYTEDSVVSSDFVGDTHSSIFDAGAGISLNDNFVKLISWYDNEFGYSHRVADLLMYMHSKE.

Residues R13 to I14, D34, and M79 each bind NAD(+). Residues S151 to T153, T182, T211 to G212, and R234 contribute to the D-glyceraldehyde 3-phosphate site. The active-site Nucleophile is C152. N316 is an NAD(+) binding site.

The protein belongs to the glyceraldehyde-3-phosphate dehydrogenase family. As to quaternary structure, homotetramer.

The protein localises to the cytoplasm. It catalyses the reaction D-glyceraldehyde 3-phosphate + phosphate + NAD(+) = (2R)-3-phospho-glyceroyl phosphate + NADH + H(+). It participates in carbohydrate degradation; glycolysis; pyruvate from D-glyceraldehyde 3-phosphate: step 1/5. In terms of biological role, glyceraldehyde-3-phosphate dehydrogenase is a key enzyme in glycolysis that catalyzes the first step of the pathway by converting D-glyceraldehyde 3-phosphate (G3P) into 3-phospho-D-glyceroyl phosphate. The protein is Glyceraldehyde-3-phosphate dehydrogenase 2 (gapdh-2) of Danio rerio (Zebrafish).